The chain runs to 437 residues: ATP-dependent protease ATPase subunit HslU (437 aa).

ATP contacts are provided by residues Val18, 60–65 (GVGKTE), Asp249, Glu315, and Arg387.

The protein belongs to the ClpX chaperone family. HslU subfamily. In terms of assembly, a double ring-shaped homohexamer of HslV is capped on each side by a ring-shaped HslU homohexamer. The assembly of the HslU/HslV complex is dependent on binding of ATP.

The protein resides in the cytoplasm. In terms of biological role, ATPase subunit of a proteasome-like degradation complex; this subunit has chaperone activity. The binding of ATP and its subsequent hydrolysis by HslU are essential for unfolding of protein substrates subsequently hydrolyzed by HslV. HslU recognizes the N-terminal part of its protein substrates and unfolds these before they are guided to HslV for hydrolysis. The sequence is that of ATP-dependent protease ATPase subunit HslU from Rhodospirillum centenum (strain ATCC 51521 / SW).